Reading from the N-terminus, the 386-residue chain is Antilisterial bacteriocin subtilosin biosynthesis protein AlbE (386 aa).

Involved in the production of the bacteriocin subtilosin. This Bacillus subtilis protein is Antilisterial bacteriocin subtilosin biosynthesis protein AlbE (albE).